The chain runs to 236 residues: Large ribosomal subunit protein uL3 (236 aa).

Belongs to the universal ribosomal protein uL3 family. As to quaternary structure, part of the 50S ribosomal subunit. Forms a cluster with proteins L14 and L19.

Functionally, one of the primary rRNA binding proteins, it binds directly near the 3'-end of the 23S rRNA, where it nucleates assembly of the 50S subunit. This is Large ribosomal subunit protein uL3 from Anaeromyxobacter dehalogenans (strain 2CP-1 / ATCC BAA-258).